The sequence spans 419 residues: L-rhamnose isomerase (419 aa).

The Mn(2+) site is built by H262, D294, and D296.

This sequence belongs to the rhamnose isomerase family. Homotetramer. It depends on Mn(2+) as a cofactor.

The protein localises to the cytoplasm. The catalysed reaction is L-rhamnopyranose = L-rhamnulose. The protein operates within carbohydrate degradation; L-rhamnose degradation; glycerone phosphate from L-rhamnose: step 1/3. Functionally, catalyzes the interconversion of L-rhamnose and L-rhamnulose. This is L-rhamnose isomerase from Escherichia fergusonii (strain ATCC 35469 / DSM 13698 / CCUG 18766 / IAM 14443 / JCM 21226 / LMG 7866 / NBRC 102419 / NCTC 12128 / CDC 0568-73).